Consider the following 180-residue polypeptide: NAD(P)H-quinone oxidoreductase subunit I, chloroplastic (180 aa).

2 4Fe-4S ferredoxin-type domains span residues 55-84 (GRIH…VDWK) and 95-124 (LNYS…MTEE). Residues cysteine 64, cysteine 67, cysteine 70, cysteine 74, cysteine 104, cysteine 107, cysteine 110, and cysteine 114 each contribute to the [4Fe-4S] cluster site.

Belongs to the complex I 23 kDa subunit family. NDH is composed of at least 16 different subunits, 5 of which are encoded in the nucleus. It depends on [4Fe-4S] cluster as a cofactor.

The protein resides in the plastid. The protein localises to the chloroplast thylakoid membrane. The enzyme catalyses a plastoquinone + NADH + (n+1) H(+)(in) = a plastoquinol + NAD(+) + n H(+)(out). It catalyses the reaction a plastoquinone + NADPH + (n+1) H(+)(in) = a plastoquinol + NADP(+) + n H(+)(out). Functionally, NDH shuttles electrons from NAD(P)H:plastoquinone, via FMN and iron-sulfur (Fe-S) centers, to quinones in the photosynthetic chain and possibly in a chloroplast respiratory chain. The immediate electron acceptor for the enzyme in this species is believed to be plastoquinone. Couples the redox reaction to proton translocation, and thus conserves the redox energy in a proton gradient. The chain is NAD(P)H-quinone oxidoreductase subunit I, chloroplastic from Sorghum bicolor (Sorghum).